The following is a 175-amino-acid chain: MNTDHTKRNLFELYAELIHQQEKWEGLIKAFLSDELRKLDVEHGSKSQLTMTEIHVLSCVGDNEPINVTSIAEKMNTTKATVSRISTKLLGAGFLHRTQLSDNKKEVYFRLTPAGKKLHSLHKYYHQKAEQRFLSFFDRYTEEEILFAERLFRDLVTKWYPSSEEIEGGLPSIFK.

The HTH marR-type domain occupies 10–157; it reads LFELYAELIH…AERLFRDLVT (148 aa). A DNA-binding region (H-T-H motif) is located at residues 68–91; it reads VTSIAEKMNTTKATVSRISTKLLG.

Its subcellular location is the cytoplasm. This is an uncharacterized protein from Bacillus subtilis (strain 168).